Consider the following 338-residue polypeptide: MTALRLLVSDSHDPLFNLAVEECIFRQMDPNQRVLFLWRNANTVVIGRAQNPWKECNTRRMEEDGVTLARRSSGGGAVFHDLSNSCFIFMAGKPGYDKSISTAIALDALKLLGVSAFASGRNDLLVATQDGDRKVSGSAYRETHDRGFHHGTLLLDADLSRLANYLNPDPKKLAAKGISSVRSRVANLCELLPGIEHQQVSHALIEAFFAHYGARVSPEHISPTQLPDLPGFADTFARQRSWEWNFGHAPAFTHQLDERFDWGGVELHFDVEKGVIGRAQIFSDSLDPAPLDALAQRLVGVAYRSDAIAALFGQLKADFPARQAELDALAGWLQAALR.

One can recognise a BPL/LPL catalytic domain in the interval 29–216 (DPNQRVLFLW…AFFAHYGARV (188 aa)). ATP-binding positions include R71, 76–79 (GAVF), and K134. K134 is a binding site for (R)-lipoate.

This sequence belongs to the LplA family. As to quaternary structure, monomer.

Its subcellular location is the cytoplasm. The enzyme catalyses L-lysyl-[lipoyl-carrier protein] + (R)-lipoate + ATP = N(6)-[(R)-lipoyl]-L-lysyl-[lipoyl-carrier protein] + AMP + diphosphate + H(+). Its pathway is protein modification; protein lipoylation via exogenous pathway; protein N(6)-(lipoyl)lysine from lipoate: step 1/2. It participates in protein modification; protein lipoylation via exogenous pathway; protein N(6)-(lipoyl)lysine from lipoate: step 2/2. Catalyzes both the ATP-dependent activation of exogenously supplied lipoate to lipoyl-AMP and the transfer of the activated lipoyl onto the lipoyl domains of lipoate-dependent enzymes. This is Lipoate-protein ligase A from Aeromonas salmonicida (strain A449).